The chain runs to 202 residues: Guanylate kinase (202 aa).

Positions 3 to 181 (GNLFIITAPS…ALEDLRAIIR (179 aa)) constitute a Guanylate kinase-like domain. 10–17 (APSGAGKT) contacts ATP.

Belongs to the guanylate kinase family.

Its subcellular location is the cytoplasm. It carries out the reaction GMP + ATP = GDP + ADP. In terms of biological role, essential for recycling GMP and indirectly, cGMP. The chain is Guanylate kinase from Methylobacillus flagellatus (strain ATCC 51484 / DSM 6875 / VKM B-1610 / KT).